Reading from the N-terminus, the 411-residue chain is Pyridinium-3,5-bisthiocarboxylic acid mononucleotide nickel insertion protein (411 aa).

The protein belongs to the LarC family.

It carries out the reaction Ni(II)-pyridinium-3,5-bisthiocarboxylate mononucleotide = pyridinium-3,5-bisthiocarboxylate mononucleotide + Ni(2+). In terms of biological role, involved in the biosynthesis of a nickel-pincer cofactor ((SCS)Ni(II) pincer complex). Binds Ni(2+), and functions in nickel delivery to pyridinium-3,5-bisthiocarboxylic acid mononucleotide (P2TMN), to form the mature cofactor. Is thus probably required for the activation of nickel-pincer cofactor-dependent enzymes. The protein is Pyridinium-3,5-bisthiocarboxylic acid mononucleotide nickel insertion protein of Geobacillus kaustophilus (strain HTA426).